A 317-amino-acid polypeptide reads, in one-letter code: tRNA dimethylallyltransferase (317 aa).

16–23 (GPTASGKS) contributes to the ATP binding site. 18 to 23 (TASGKS) is a binding site for substrate. 3 interaction with substrate tRNA regions span residues 41 to 44 (DSAQ), 165 to 169 (QRIQR), and 247 to 252 (RCVGYR).

The protein belongs to the IPP transferase family. As to quaternary structure, monomer. It depends on Mg(2+) as a cofactor.

It carries out the reaction adenosine(37) in tRNA + dimethylallyl diphosphate = N(6)-dimethylallyladenosine(37) in tRNA + diphosphate. Its function is as follows. Catalyzes the transfer of a dimethylallyl group onto the adenine at position 37 in tRNAs that read codons beginning with uridine, leading to the formation of N6-(dimethylallyl)adenosine (i(6)A). In Nitrosomonas eutropha (strain DSM 101675 / C91 / Nm57), this protein is tRNA dimethylallyltransferase.